The primary structure comprises 984 residues: Lateral signaling target protein 2 homolog (984 aa).

4 disordered regions span residues proline 308–glutamate 462, tyrosine 508–serine 527, arginine 539–serine 642, and aspartate 749–alanine 900. Low complexity-rich tracts occupy residues threonine 326–threonine 356, asparagine 369–asparagine 380, threonine 387–alanine 404, and proline 412–tryptophan 433. Acidic residues predominate over residues serine 434–glutamate 462. Phosphoserine is present on residues serine 544 and serine 545. The span at arginine 571–arginine 611 shows a compositional bias: basic residues. Residues leucine 630–serine 642 are compositionally biased toward low complexity. Polar residues-rich tracts occupy residues alanine 760–leucine 779 and serine 789–leucine 806. Serine 805 bears the Phosphoserine mark. 2 stretches are compositionally biased toward low complexity: residues alanine 811 to alanine 869 and proline 886 to proline 899. The FYVE-type zinc finger occupies aspartate 904–valine 964. 8 residues coordinate Zn(2+): cysteine 910, cysteine 913, cysteine 926, cysteine 929, cysteine 934, cysteine 937, cysteine 956, and cysteine 959.

This sequence belongs to the lst-2 family.

Its function is as follows. Negative regulator of epidermal growth factor receptor (EGFR) signaling. The protein is Lateral signaling target protein 2 homolog of Drosophila yakuba (Fruit fly).